We begin with the raw amino-acid sequence, 326 residues long: DNA-directed RNA polymerase subunit alpha (326 aa).

The tract at residues 1 to 232 (MQSATEFLKP…SQLSVFADLE (232 aa)) is alpha N-terminal domain (alpha-NTD). The alpha C-terminal domain (alpha-CTD) stretch occupies residues 246 to 326 (VDPLLLRPVD…NWPPAGLERP (81 aa)).

The protein belongs to the RNA polymerase alpha chain family. In terms of assembly, homodimer. The RNAP catalytic core consists of 2 alpha, 1 beta, 1 beta' and 1 omega subunit. When a sigma factor is associated with the core the holoenzyme is formed, which can initiate transcription.

The catalysed reaction is RNA(n) + a ribonucleoside 5'-triphosphate = RNA(n+1) + diphosphate. Its function is as follows. DNA-dependent RNA polymerase catalyzes the transcription of DNA into RNA using the four ribonucleoside triphosphates as substrates. The chain is DNA-directed RNA polymerase subunit alpha from Thiobacillus denitrificans (strain ATCC 25259 / T1).